A 379-amino-acid chain; its full sequence is 2-dehydropantoate 2-reductase (379 aa).

NADP(+) contacts are provided by residues 13–18 and Asn-119; that span reads GLGAMG. Asn-119 contacts substrate. The active-site Proton donor is the Lys-224. Substrate contacts are provided by Asn-228, Asn-232, and Ser-316. Glu-328 lines the NADP(+) pocket.

Belongs to the ketopantoate reductase family.

It carries out the reaction (R)-pantoate + NADP(+) = 2-dehydropantoate + NADPH + H(+). The protein operates within cofactor biosynthesis; (R)-pantothenate biosynthesis; (R)-pantoate from 3-methyl-2-oxobutanoate: step 2/2. Its function is as follows. Catalyzes the NADPH-dependent reduction of ketopantoate into pantoic acid. This is 2-dehydropantoate 2-reductase (PAN5) from Saccharomyces cerevisiae (strain ATCC 204508 / S288c) (Baker's yeast).